We begin with the raw amino-acid sequence, 470 residues long: Siroheme synthase (470 aa).

Residues 1–201 (MDYFPIFCQL…NDHVQADQHV (201 aa)) are precorrin-2 dehydrogenase /sirohydrochlorin ferrochelatase. NAD(+) contacts are provided by residues 22-23 (EI) and 43-44 (CE). S128 is subject to Phosphoserine. Residues 213 to 470 (GEVVLVGAGP…KVTECVAHVG (258 aa)) are uroporphyrinogen-III C-methyltransferase. P222 provides a ligand contact to S-adenosyl-L-methionine. The active-site Proton acceptor is the D245. The active-site Proton donor is K267. Residues 298–300 (GGD), I303, 328–329 (TA), M379, and G408 each bind S-adenosyl-L-methionine.

This sequence in the N-terminal section; belongs to the precorrin-2 dehydrogenase / sirohydrochlorin ferrochelatase family. In the C-terminal section; belongs to the precorrin methyltransferase family.

It catalyses the reaction uroporphyrinogen III + 2 S-adenosyl-L-methionine = precorrin-2 + 2 S-adenosyl-L-homocysteine + H(+). The enzyme catalyses precorrin-2 + NAD(+) = sirohydrochlorin + NADH + 2 H(+). The catalysed reaction is siroheme + 2 H(+) = sirohydrochlorin + Fe(2+). Its pathway is cofactor biosynthesis; adenosylcobalamin biosynthesis; precorrin-2 from uroporphyrinogen III: step 1/1. It functions in the pathway cofactor biosynthesis; adenosylcobalamin biosynthesis; sirohydrochlorin from precorrin-2: step 1/1. It participates in porphyrin-containing compound metabolism; siroheme biosynthesis; precorrin-2 from uroporphyrinogen III: step 1/1. The protein operates within porphyrin-containing compound metabolism; siroheme biosynthesis; siroheme from sirohydrochlorin: step 1/1. Its pathway is porphyrin-containing compound metabolism; siroheme biosynthesis; sirohydrochlorin from precorrin-2: step 1/1. Its function is as follows. Multifunctional enzyme that catalyzes the SAM-dependent methylations of uroporphyrinogen III at position C-2 and C-7 to form precorrin-2 via precorrin-1. Then it catalyzes the NAD-dependent ring dehydrogenation of precorrin-2 to yield sirohydrochlorin. Finally, it catalyzes the ferrochelation of sirohydrochlorin to yield siroheme. The chain is Siroheme synthase from Yersinia pestis.